The following is a 138-amino-acid chain: Large ribosomal subunit protein uL16 (138 aa).

It belongs to the universal ribosomal protein uL16 family. As to quaternary structure, part of the 50S ribosomal subunit.

Functionally, binds 23S rRNA and is also seen to make contacts with the A and possibly P site tRNAs. The protein is Large ribosomal subunit protein uL16 of Anaeromyxobacter sp. (strain Fw109-5).